The sequence spans 337 residues: Ornithine carbamoyltransferase, catabolic (337 aa).

Carbamoyl phosphate contacts are provided by residues 58 to 61 (STRT), Q85, R109, and 135 to 138 (HPTQ). L-ornithine-binding positions include N167, D231, and 235 to 236 (SM). Residues 272 to 273 (CL) and R317 each bind carbamoyl phosphate.

It belongs to the aspartate/ornithine carbamoyltransferase superfamily. OTCase family.

It is found in the cytoplasm. The enzyme catalyses carbamoyl phosphate + L-ornithine = L-citrulline + phosphate + H(+). It participates in amino-acid degradation; L-arginine degradation via ADI pathway; carbamoyl phosphate from L-arginine: step 2/2. Reversibly catalyzes the transfer of the carbamoyl group from carbamoyl phosphate (CP) to the N(epsilon) atom of ornithine (ORN) to produce L-citrulline. The sequence is that of Ornithine carbamoyltransferase, catabolic (arcB) from Latilactobacillus sakei (Lactobacillus sakei).